Reading from the N-terminus, the 282-residue chain is Bis(5'-nucleosyl)-tetraphosphatase, symmetrical (282 aa).

It belongs to the Ap4A hydrolase family.

It carries out the reaction P(1),P(4)-bis(5'-adenosyl) tetraphosphate + H2O = 2 ADP + 2 H(+). Functionally, hydrolyzes diadenosine 5',5'''-P1,P4-tetraphosphate to yield ADP. The chain is Bis(5'-nucleosyl)-tetraphosphatase, symmetrical from Burkholderia pseudomallei (strain 1106a).